Reading from the N-terminus, the 1332-residue chain is Xanthine dehydrogenase/oxidase (1332 aa).

One can recognise a 2Fe-2S ferredoxin-type domain in the interval 4–91 (DELVFFVNGK…HVAVTTVEGI (88 aa)). 8 residues coordinate [2Fe-2S] cluster: Cys43, Cys48, Cys51, Cys73, Cys113, Cys116, Cys148, and Cys150. Residues 229–414 (FEGERVTWIQ…LSIEIPYSRE (186 aa)) form the FAD-binding PCMH-type domain. Residues 257–264 (LVVGNTEI), Phe337, 347–351 (SLGGN), Asp360, Leu404, and Lys422 each bind FAD. A disulfide bond links Cys535 and Cys992. Mo-molybdopterin-binding residues include Gln767 and Phe798. Substrate contacts are provided by Glu802 and Arg880. Residue Arg912 participates in Mo-molybdopterin binding. 2 residues coordinate substrate: Phe914 and Thr1010. Ala1079 contributes to the Mo-molybdopterin binding site. Glu1261 acts as the Proton acceptor in catalysis.

This sequence belongs to the xanthine dehydrogenase family. Homodimer. Interacts with BTN1A1. [2Fe-2S] cluster is required as a cofactor. Requires FAD as cofactor. The cofactor is Mo-molybdopterin. Post-translationally, subject to partial proteolysis; this alters the enzyme from the dehydrogenase form (D) to the oxidase form (O). In terms of processing, contains sulfhydryl groups that are easily oxidized (in vitro); this alters the enzyme from the dehydrogenase form (D) to the oxidase form (O). In terms of tissue distribution, detected in milk (at protein level).

Its subcellular location is the cytoplasm. The protein resides in the peroxisome. The protein localises to the secreted. The enzyme catalyses xanthine + NAD(+) + H2O = urate + NADH + H(+). The catalysed reaction is hypoxanthine + NAD(+) + H2O = xanthine + NADH + H(+). It carries out the reaction xanthine + O2 + H2O = urate + H2O2. With respect to regulation, can be converted from the dehydrogenase form (D) to the oxidase form (O) irreversibly by proteolysis or reversibly through the oxidation of sulfhydryl groups. In terms of biological role, key enzyme in purine degradation. Catalyzes the oxidation of hypoxanthine to xanthine. Catalyzes the oxidation of xanthine to uric acid. Contributes to the generation of reactive oxygen species. The polypeptide is Xanthine dehydrogenase/oxidase (XDH) (Bos taurus (Bovine)).